The following is a 122-amino-acid chain: Small ribosomal subunit protein uS13 (122 aa).

The segment at 93–122 (RRGLPVRGQKTKTNARTRKGPKKTMANKKK) is disordered.

The protein belongs to the universal ribosomal protein uS13 family. Part of the 30S ribosomal subunit. Forms a loose heterodimer with protein S19. Forms two bridges to the 50S subunit in the 70S ribosome.

Its function is as follows. Located at the top of the head of the 30S subunit, it contacts several helices of the 16S rRNA. In the 70S ribosome it contacts the 23S rRNA (bridge B1a) and protein L5 of the 50S subunit (bridge B1b), connecting the 2 subunits; these bridges are implicated in subunit movement. Contacts the tRNAs in the A and P-sites. This Clostridium botulinum (strain Alaska E43 / Type E3) protein is Small ribosomal subunit protein uS13.